The sequence spans 415 residues: Diaminopimelate decarboxylase (415 aa).

The residue at position 60 (Lys60) is an N6-(pyridoxal phosphate)lysine. Pyridoxal 5'-phosphate is bound by residues Gly239 and Glu273–Arg276. Substrate is bound by residues Arg276, Arg312, and Tyr316. The Proton donor role is filled by Cys342. Substrate contacts are provided by Glu343 and Tyr370. Tyr370 contacts pyridoxal 5'-phosphate.

The protein belongs to the Orn/Lys/Arg decarboxylase class-II family. LysA subfamily. In terms of assembly, homodimer. Pyridoxal 5'-phosphate serves as cofactor.

It catalyses the reaction meso-2,6-diaminopimelate + H(+) = L-lysine + CO2. It participates in amino-acid biosynthesis; L-lysine biosynthesis via DAP pathway; L-lysine from DL-2,6-diaminopimelate: step 1/1. Functionally, specifically catalyzes the decarboxylation of meso-diaminopimelate (meso-DAP) to L-lysine. This chain is Diaminopimelate decarboxylase, found in Pseudomonas aeruginosa (strain ATCC 15692 / DSM 22644 / CIP 104116 / JCM 14847 / LMG 12228 / 1C / PRS 101 / PAO1).